The sequence spans 542 residues: Esterase 6 (542 aa).

The first 19 residues, 1 to 19 (MNYVGLIIVLSCLWLGSNA), serve as a signal peptide directing secretion. The N-linked (GlcNAc...) asparagine glycan is linked to Asn-40. An intrachain disulfide couples Cys-84 to Cys-103. Residue Ser-207 is the Acyl-ester intermediate of the active site. Cys-259 and Cys-271 form a disulfide bridge. N-linked (GlcNAc...) asparagine glycosylation is found at Asn-418 and Asn-454. His-464 (charge relay system) is an active-site residue. The cysteines at positions 512 and 533 are disulfide-linked.

Belongs to the type-B carboxylesterase/lipase family. Monomer.

The protein localises to the secreted. It catalyses the reaction a carboxylic ester + H2O = an alcohol + a carboxylate + H(+). Functionally, transferred from the ejaculatory bulbs of males to the female genitals upon copulation, plays an important role in the reproductive biology. This is Esterase 6 (Est-6) from Drosophila simulans (Fruit fly).